A 345-amino-acid chain; its full sequence is Phenylalanine--tRNA ligase alpha subunit (345 aa).

Residue Glu272 coordinates Mg(2+).

The protein belongs to the class-II aminoacyl-tRNA synthetase family. Phe-tRNA synthetase alpha subunit type 1 subfamily. As to quaternary structure, tetramer of two alpha and two beta subunits. Requires Mg(2+) as cofactor.

The protein resides in the cytoplasm. The enzyme catalyses tRNA(Phe) + L-phenylalanine + ATP = L-phenylalanyl-tRNA(Phe) + AMP + diphosphate + H(+). The polypeptide is Phenylalanine--tRNA ligase alpha subunit (Prochlorococcus marinus (strain MIT 9312)).